A 148-amino-acid chain; its full sequence is UPF0756 membrane protein Ent638_1667 (148 aa).

The next 4 membrane-spanning stretches (helical) occupy residues 14-34 (ALGF…LIIV), 51-71 (LTIG…SGTL), 86-106 (LIAI…VTLM), and 121-141 (VLGV…AGLV).

It belongs to the UPF0756 family.

Its subcellular location is the cell membrane. In Enterobacter sp. (strain 638), this protein is UPF0756 membrane protein Ent638_1667.